Here is a 179-residue protein sequence, read N- to C-terminus: Large ribosomal subunit protein uL5 (179 aa).

It belongs to the universal ribosomal protein uL5 family. As to quaternary structure, part of the 50S ribosomal subunit; part of the 5S rRNA/L5/L18/L25 subcomplex. Contacts the 5S rRNA and the P site tRNA. Forms a bridge to the 30S subunit in the 70S ribosome.

Functionally, this is one of the proteins that bind and probably mediate the attachment of the 5S RNA into the large ribosomal subunit, where it forms part of the central protuberance. In the 70S ribosome it contacts protein S13 of the 30S subunit (bridge B1b), connecting the 2 subunits; this bridge is implicated in subunit movement. Contacts the P site tRNA; the 5S rRNA and some of its associated proteins might help stabilize positioning of ribosome-bound tRNAs. This is Large ribosomal subunit protein uL5 from Methylococcus capsulatus (strain ATCC 33009 / NCIMB 11132 / Bath).